A 67-amino-acid polypeptide reads, in one-letter code: Large ribosomal subunit protein bL35 (67 aa).

The span at 1-16 (MPKMKTKSSAKKRFRV) shows a compositional bias: basic residues. The tract at residues 1–24 (MPKMKTKSSAKKRFRVRPGGTVKR) is disordered.

The protein belongs to the bacterial ribosomal protein bL35 family.

The polypeptide is Large ribosomal subunit protein bL35 (Delftia acidovorans (strain DSM 14801 / SPH-1)).